The chain runs to 516 residues: Putative thymidine phosphorylase (516 aa).

This sequence belongs to the thymidine/pyrimidine-nucleoside phosphorylase family. Type 2 subfamily.

It carries out the reaction thymidine + phosphate = 2-deoxy-alpha-D-ribose 1-phosphate + thymine. This Methylococcus capsulatus (strain ATCC 33009 / NCIMB 11132 / Bath) protein is Putative thymidine phosphorylase.